Reading from the N-terminus, the 630-residue chain is Polygalacturonase-1 non-catalytic subunit beta (630 aa).

The first 27 residues, 1–27, serve as a signal peptide directing secretion; sequence MHTKIHLPPCILLLLLFSLPSFNVVVG. Residues 28–108 constitute a propeptide that is removed on maturation; that stretch reads GDGESGNPFT…MCAPDLSPSL (81 aa). N-linked (GlcNAc...) asparagine glycosylation is found at asparagine 124, asparagine 142, asparagine 256, asparagine 334, asparagine 369, and asparagine 387. Residues 398–630 constitute a propeptide that is removed on maturation; that stretch reads EVNGGKKVNN…ENDMTWAIAD (233 aa). One can recognise a BURP domain in the interval 415–629; sequence FFREKMLKSG…FENDMTWAIA (215 aa).

As to quaternary structure, interacts with polygalacturonase-2 (isoenzymes PG2A and PG2B) to form heterodimers called polygalacturonase-1 (PG1). In terms of tissue distribution, mostly expressed in fruit pericarp. Also detected at low levels in cell wall of roots, leaves and flowers (at protein level).

It localises to the secreted. It is found in the extracellular space. Its subcellular location is the apoplast. The protein resides in the cell wall. In terms of biological role, non-catalytic subunit of the polygalacturonase isozyme 1 (PG1). Necessary and sufficient to convert the polygalacturonase from its monomeric form PG2 to its heterodimeric form PG1. Seems to limit the depolymerization and solubilization of cell wall polyuronides mediated by PG2 during ripening, probably by recruiting PG2 to form PG1. The chain is Polygalacturonase-1 non-catalytic subunit beta (GP1) from Solanum lycopersicum (Tomato).